A 528-amino-acid chain; its full sequence is GMP synthase [glutamine-hydrolyzing] (528 aa).

The 192-residue stretch at 13-204 (SIVILDFGSQ…VHNICRSKPD (192 aa)) folds into the Glutamine amidotransferase type-1 domain. Cysteine 90 functions as the Nucleophile in the catalytic mechanism. Catalysis depends on residues histidine 178 and glutamate 180. Residues 205–403 (WTTNTFIDEA…LGLPEEIVNR (199 aa)) enclose the GMPS ATP-PPase domain. 232-238 (SGGVDSS) contacts ATP.

Homodimer.

The catalysed reaction is XMP + L-glutamine + ATP + H2O = GMP + L-glutamate + AMP + diphosphate + 2 H(+). It participates in purine metabolism; GMP biosynthesis; GMP from XMP (L-Gln route): step 1/1. Functionally, catalyzes the synthesis of GMP from XMP. This is GMP synthase [glutamine-hydrolyzing] from Prochlorococcus marinus (strain SARG / CCMP1375 / SS120).